The sequence spans 299 residues: Protoheme IX farnesyltransferase (299 aa).

9 helical membrane-spanning segments follow: residues 26–46 (VNAL…PDGL), 53–73 (FAAT…NCLI), 94–114 (LHSV…LSVL), 121–141 (LTMW…TLLL), 149–169 (IVIG…AVSG), 175–195 (ALLL…SLAL), 217–239 (YTRL…PFAI), 243–265 (GWIY…WRLL), and 277–297 (FRFS…DHYL).

It belongs to the UbiA prenyltransferase family. Protoheme IX farnesyltransferase subfamily.

Its subcellular location is the cell inner membrane. The catalysed reaction is heme b + (2E,6E)-farnesyl diphosphate + H2O = Fe(II)-heme o + diphosphate. The protein operates within porphyrin-containing compound metabolism; heme O biosynthesis; heme O from protoheme: step 1/1. Its function is as follows. Converts heme B (protoheme IX) to heme O by substitution of the vinyl group on carbon 2 of heme B porphyrin ring with a hydroxyethyl farnesyl side group. This is Protoheme IX farnesyltransferase from Azoarcus sp. (strain BH72).